We begin with the raw amino-acid sequence, 292 residues long: Acetylglutamate kinase (292 aa).

Substrate contacts are provided by residues 64 to 65, R86, and N190; that span reads GG.

It belongs to the acetylglutamate kinase family. ArgB subfamily.

The protein resides in the cytoplasm. The enzyme catalyses N-acetyl-L-glutamate + ATP = N-acetyl-L-glutamyl 5-phosphate + ADP. It participates in amino-acid biosynthesis; L-arginine biosynthesis; N(2)-acetyl-L-ornithine from L-glutamate: step 2/4. Functionally, catalyzes the ATP-dependent phosphorylation of N-acetyl-L-glutamate. This chain is Acetylglutamate kinase, found in Citrifermentans bemidjiense (strain ATCC BAA-1014 / DSM 16622 / JCM 12645 / Bem) (Geobacter bemidjiensis).